The following is a 150-amino-acid chain: Large ribosomal subunit protein bL9 (150 aa).

This sequence belongs to the bacterial ribosomal protein bL9 family.

In terms of biological role, binds to the 23S rRNA. This chain is Large ribosomal subunit protein bL9, found in Sodalis glossinidius (strain morsitans).